We begin with the raw amino-acid sequence, 1494 residues long: MYSEWRSLHLVIQNDQGHTSVLHSYPESVGREVANAVVRPLGQVLGTPSVAGSENLLKTDKEVKWTMEVICYGLTLPLDGETVKYCVDVYTDWIMALVLPKDSIPLPVIKEPNQYVQTILKHLQNLFVPRQEQGSSQIRLCLQVLRAIQKLARESSLMARETWEVLLLFLLQINDILLAPPTVQGGIAENLAEKLIGVLFEVWLLACTRCFPTPPYWKTAKEMVANWRHHPAVVEQWSKVICALTSRLLRFTYGPSFPAFKVPDEDASLIPPEMDNECVAQTWFRFLHMLSNPVDLSNPAIISSTPKFQEQFLNVSGMPQELNQYPCLKHLPQIFFRAMRGISCLVDAFLGISRPRSDSAPPTPVNRLSMPQSAAVSTTPPHNRRHRAVTVNKATMKTSTVSTAHASKVQHQTSSTSPLSSPNQTSSEPRPLPAPRRPKVNSILNLFGSWLFDAAFVHCKLHNGINRDSSMTAITTQASMEFRRKGSQMSTDTMVSNPMFDASEFPDNYEAGRAEACGTLCRIFCSKKTGEEILPAYLSRFYMLLIQGLQINDYVCHPVLASVILNSPPLFCCDLKGIDVVVPYFISALETILPDRELSKFKSYVNPTELRRSSINILLSLLPLPHHFGTVKSEVVLEGKFSNDDSSSYDKPITFLSLKLRLVNILIGALQTETDPNNTQMILGAMLNIVQDSALLEAIGCQMEMGGGENNLKSHSRTNSGISSASGGSTEPTTPDSERPAQALLRDYALNTDSAAGLLIRSIHLVTQRLNSQWRQDMSISLAALELLSGLAKVKVMVDSGDRKRAISSVCTYIVYQCSRPAPLHSRDLHSMIVAAFQCLCVWLTEHPDMLDEKDCLKEVLEIVELGISGSKSKNNEQEVKYKGDKEPNPASMRVKDAAEATLTCIMQLLGAFPSPSGPASPCSLVNETTLIKYSRLPTINKHSFRYFVLDNSVILAMLEQPLGNEQNDFFPSVTVLVRGMSGRLAWAQQLCLLPRGAKANQKLFVPEPRPVPKNDVGFKYSVKHRPFPEEVDKIPFVKADLSIPDLHEIVTEELEERHEKLRSGMAQQIAYEIHLEQQSEEELQKRSFPDPVTDCKPPPPAQEFQTARLFLSHFGFLSLEALKEPANSRLPPHLIALDSTIPGFFDDIGYLDLLPCRPFDTVFIFYMKPGQKTNQEILKNVESSRTVQPHFLEFLLSLGWSVDVGRHPGWTGHVSTSWSINCCDDGEGSQQEVISSEDIGASIFNGQKKVLYYADALTEIAFVVPSPVESLTDSLESNISDQDSDSNMDLMPGILKQPSLTLELFPNHTDNLNSSQRLSPSSRMRKLPQGRPVPPLGPETRVSVVWVERYDDIENFPLSELMTEISTGVETTANSSTSLRSTTLEKEVPVIFIHPLNTGLFRIKIQGATGKFNMVIPLVDGMIVSRRALGFLVRQTVINICRRKRLESDSYSPPHVRRKQKITDIVNKYRNKQLEPEFYTSLFQEVGLKNCSS.

Disordered stretches follow at residues 355–437 and 709–738; these read PRSD…APRR and ENNLKSHSRTNSGISSASGGSTEPTTPDSE. At serine 359 the chain carries Phosphoserine. Residues threonine 363 and threonine 379 each carry the phosphothreonine modification. Composition is skewed to polar residues over residues 369–381, 392–428, and 711–735; these read SMPQSAAVSTTPP, NKATMKTSTVSTAHASKVQHQTSSTSPLSSPNQTSSE, and NLKSHSRTNSGISSASGGSTEPTTP. 2 positions are modified to phosphoserine: serine 421 and serine 720. Threonine 734 carries the post-translational modification Phosphothreonine. A Rap-GAP domain is found at 1149–1392; it reads IGYLDLLPCR…TTLEKEVPVI (244 aa). Serine 1285 carries the phosphoserine modification. Residues 1312-1323 show a composition bias toward polar residues; that stretch reads NLNSSQRLSPSS. The tract at residues 1312 to 1335 is disordered; the sequence is NLNSSQRLSPSSRMRKLPQGRPVP.

Component of the heterodimeric RalGAP1 complex with RALGAPA1 and of the heterodimeric RalGAP2 complex with RALGAPA2. Heterodimerization is required for activity. As to expression, highly expressed in brain, mostly in amygdala.

Functionally, non-catalytic subunit of the heterodimeric RalGAP1 and RalGAP2 complexes which act as GTPase activators for the Ras-like small GTPases RALA and RALB. In Homo sapiens (Human), this protein is Ral GTPase-activating protein subunit beta (RALGAPB).